Consider the following 268-residue polypeptide: Tryptophan synthase alpha chain (268 aa).

Residues glutamate 49 and aspartate 60 each act as proton acceptor in the active site.

It belongs to the TrpA family. In terms of assembly, tetramer of two alpha and two beta chains.

It catalyses the reaction (1S,2R)-1-C-(indol-3-yl)glycerol 3-phosphate + L-serine = D-glyceraldehyde 3-phosphate + L-tryptophan + H2O. Its pathway is amino-acid biosynthesis; L-tryptophan biosynthesis; L-tryptophan from chorismate: step 5/5. Its function is as follows. The alpha subunit is responsible for the aldol cleavage of indoleglycerol phosphate to indole and glyceraldehyde 3-phosphate. In Escherichia coli O17:K52:H18 (strain UMN026 / ExPEC), this protein is Tryptophan synthase alpha chain.